An 835-amino-acid chain; its full sequence is Leucine--tRNA ligase (835 aa).

Residues 36–46 (PYPSGKIHVGH) carry the 'HIGH' region motif. Residues 602–606 (KMSKS) carry the 'KMSKS' region motif. Lys-605 is a binding site for ATP.

This sequence belongs to the class-I aminoacyl-tRNA synthetase family.

Its subcellular location is the cytoplasm. The catalysed reaction is tRNA(Leu) + L-leucine + ATP = L-leucyl-tRNA(Leu) + AMP + diphosphate. This is Leucine--tRNA ligase from Rickettsia massiliae (strain Mtu5).